Consider the following 360-residue polypeptide: Peptide chain release factor 1 (360 aa).

Glutamine 234 is modified (N5-methylglutamine).

The protein belongs to the prokaryotic/mitochondrial release factor family. Post-translationally, methylated by PrmC. Methylation increases the termination efficiency of RF1.

Its subcellular location is the cytoplasm. In terms of biological role, peptide chain release factor 1 directs the termination of translation in response to the peptide chain termination codons UAG and UAA. This chain is Peptide chain release factor 1, found in Clostridium botulinum (strain Alaska E43 / Type E3).